Reading from the N-terminus, the 117-residue chain is Large ribosomal subunit protein bL20 (117 aa).

Belongs to the bacterial ribosomal protein bL20 family.

In terms of biological role, binds directly to 23S ribosomal RNA and is necessary for the in vitro assembly process of the 50S ribosomal subunit. It is not involved in the protein synthesizing functions of that subunit. The polypeptide is Large ribosomal subunit protein bL20 (Wigglesworthia glossinidia brevipalpis).